The chain runs to 183 residues: ADP-ribosylation factor 3 (183 aa).

Gly2 is lipidated: N-myristoyl glycine. Residues 24-31, 67-71, and 126-129 contribute to the GTP site; these read GLDKAGKT, DVGGQ, and NKQD.

It belongs to the small GTPase superfamily. Arf family. In terms of assembly, interacts with RUD3.

It is found in the golgi apparatus. In terms of biological role, GTP-binding protein involved in protein trafficking; may modulate vesicle budding and uncoating within the Golgi apparatus. The polypeptide is ADP-ribosylation factor 3 (ARF3) (Saccharomyces cerevisiae (strain ATCC 204508 / S288c) (Baker's yeast)).